We begin with the raw amino-acid sequence, 570 residues long: Sulfite reductase [NADPH] hemoprotein beta-component (570 aa).

C434, C440, C479, and C483 together coordinate [4Fe-4S] cluster. A siroheme-binding site is contributed by C483.

The protein belongs to the nitrite and sulfite reductase 4Fe-4S domain family. As to quaternary structure, alpha(8)-beta(8). The alpha component is a flavoprotein, the beta component is a hemoprotein. It depends on siroheme as a cofactor. [4Fe-4S] cluster serves as cofactor.

The catalysed reaction is hydrogen sulfide + 3 NADP(+) + 3 H2O = sulfite + 3 NADPH + 4 H(+). It functions in the pathway sulfur metabolism; hydrogen sulfide biosynthesis; hydrogen sulfide from sulfite (NADPH route): step 1/1. Component of the sulfite reductase complex that catalyzes the 6-electron reduction of sulfite to sulfide. This is one of several activities required for the biosynthesis of L-cysteine from sulfate. This is Sulfite reductase [NADPH] hemoprotein beta-component from Enterobacter sp. (strain 638).